A 325-amino-acid chain; its full sequence is NADH-quinone oxidoreductase subunit H (325 aa).

8 helical membrane-spanning segments follow: residues 5–25 (LIII…AAAY), 75–95 (FVYW…FVLI), 117–137 (VGVV…VLAG), 157–177 (ISYE…TGTL), 190–210 (WLIW…FAET), 240–260 (FFLG…TLFF), 268–288 (DIPI…FMWV), and 305–325 (WKVL…FTLV).

The protein belongs to the complex I subunit 1 family. NDH-1 is composed of 14 different subunits. Subunits NuoA, H, J, K, L, M, N constitute the membrane sector of the complex.

Its subcellular location is the cell inner membrane. It carries out the reaction a quinone + NADH + 5 H(+)(in) = a quinol + NAD(+) + 4 H(+)(out). Functionally, NDH-1 shuttles electrons from NADH, via FMN and iron-sulfur (Fe-S) centers, to quinones in the respiratory chain. The immediate electron acceptor for the enzyme in this species is believed to be ubiquinone. Couples the redox reaction to proton translocation (for every two electrons transferred, four hydrogen ions are translocated across the cytoplasmic membrane), and thus conserves the redox energy in a proton gradient. This subunit may bind ubiquinone. In Protochlamydia amoebophila (strain UWE25), this protein is NADH-quinone oxidoreductase subunit H.